A 545-amino-acid polypeptide reads, in one-letter code: Chaperonin GroEL (545 aa).

Residues 29–32 (TMGP), K50, 86–90 (DGTTT), G414, 480–482 (NAA), and D496 contribute to the ATP site.

It belongs to the chaperonin (HSP60) family. As to quaternary structure, forms a cylinder of 14 subunits composed of two heptameric rings stacked back-to-back. Interacts with the co-chaperonin GroES.

It localises to the cytoplasm. The catalysed reaction is ATP + H2O + a folded polypeptide = ADP + phosphate + an unfolded polypeptide.. In terms of biological role, together with its co-chaperonin GroES, plays an essential role in assisting protein folding. The GroEL-GroES system forms a nano-cage that allows encapsulation of the non-native substrate proteins and provides a physical environment optimized to promote and accelerate protein folding. This is Chaperonin GroEL from Malacoplasma penetrans (strain HF-2) (Mycoplasma penetrans).